The primary structure comprises 192 residues: Ribosomal RNA small subunit methyltransferase G (192 aa).

S-adenosyl-L-methionine contacts are provided by residues Gly63, Leu68, 112–113, and Arg125; that span reads IE.

Belongs to the methyltransferase superfamily. RNA methyltransferase RsmG family.

It is found in the cytoplasm. The catalysed reaction is guanosine(527) in 16S rRNA + S-adenosyl-L-methionine = N(7)-methylguanosine(527) in 16S rRNA + S-adenosyl-L-homocysteine. Functionally, specifically methylates the N7 position of guanine in position 527 of 16S rRNA. This is Ribosomal RNA small subunit methyltransferase G from Rickettsia rickettsii (strain Iowa).